Consider the following 180-residue polypeptide: MLEQDIQKILYSENDIIRKTKKLGEQLTKDYQEKNPLMIGVLKGSVPFMAELMKHIDTHVEIDFMVVSSYHGGTSSSGEVKILKDVDTNIEGRDIIIVEDIIDTGRTLKYLRDMFKYRKANTIKIATLFDKPEGRVVKIEADYVCYNIPNEFIVGFGLDYAENYRNLPYVGVLKEEVYSK.

K43 and G44 together coordinate diphosphate. Residues E99 and D100 each contribute to the Mg(2+) site. D103 acts as the Proton acceptor in catalysis. GMP-binding positions include K131, 152 to 153 (FI), and D159. R165 lines the diphosphate pocket.

This sequence belongs to the purine/pyrimidine phosphoribosyltransferase family. Mg(2+) serves as cofactor.

The protein resides in the cytoplasm. It catalyses the reaction IMP + diphosphate = hypoxanthine + 5-phospho-alpha-D-ribose 1-diphosphate. The catalysed reaction is GMP + diphosphate = guanine + 5-phospho-alpha-D-ribose 1-diphosphate. The protein operates within purine metabolism; IMP biosynthesis via salvage pathway; IMP from hypoxanthine: step 1/1. Its pathway is purine metabolism; GMP biosynthesis via salvage pathway; GMP from guanine: step 1/1. Its function is as follows. Purine salvage pathway enzyme that catalyzes the transfer of the ribosyl-5-phosphate group from 5-phospho-alpha-D-ribose 1-diphosphate (PRPP) to the N9 position of the 6-oxopurines hypoxanthine and guanine to form the corresponding ribonucleotides IMP (inosine 5'-monophosphate) and GMP (guanosine 5'-monophosphate), with the release of PPi. This is Hypoxanthine-guanine phosphoribosyltransferase (hpt) from Streptococcus pyogenes serotype M3 (strain ATCC BAA-595 / MGAS315).